A 378-amino-acid polypeptide reads, in one-letter code: Lipid-A-disaccharide synthase (378 aa).

This sequence belongs to the LpxB family.

It carries out the reaction a lipid X + a UDP-2-N,3-O-bis[(3R)-3-hydroxyacyl]-alpha-D-glucosamine = a lipid A disaccharide + UDP + H(+). It functions in the pathway bacterial outer membrane biogenesis; LPS lipid A biosynthesis. Functionally, condensation of UDP-2,3-diacylglucosamine and 2,3-diacylglucosamine-1-phosphate to form lipid A disaccharide, a precursor of lipid A, a phosphorylated glycolipid that anchors the lipopolysaccharide to the outer membrane of the cell. In Methylobacillus flagellatus (strain ATCC 51484 / DSM 6875 / VKM B-1610 / KT), this protein is Lipid-A-disaccharide synthase.